The following is a 221-amino-acid chain: Vesicle transport v-SNARE 11 (221 aa).

The residue at position 2 (Ser-2) is an N-acetylserine. Residues 2–198 (SDVFDGYERQ…MTRRMNKNKW (197 aa)) lie on the Cytoplasmic side of the membrane. Residues 32 to 93 (EQKKQKLSEI…FKTEVKRITS (62 aa)) are a coiled coil. Residues 199-219 (TIGAIIIALIAAIFIILYFKL) form a helical; Anchor for type IV membrane protein membrane-spanning segment. Residues 220-221 (TK) lie on the Vesicular side of the membrane.

The protein belongs to the VTI1 family. Forms SNARE complexes with the t-SNAREs SYP51 and either SYP21 or SYP22 in the PVC, and with a much lower affinity with SYP61 in the TGN. Does not interact with SYP41, SYP42 or VPS45. Binds to EPSIN1. Interacts with SCYL2B. In terms of tissue distribution, expressed in roots, stems, flowers and leaves.

The protein resides in the golgi apparatus. The protein localises to the trans-Golgi network membrane. It localises to the prevacuolar compartment membrane. Its subcellular location is the vacuole membrane. Functions as a v-SNARE responsible for targeting AtELP-containing vesicles from the trans-Golgi network (TGN) to the prevacuolar compartment (PVC) and mediates liposome fusion. May be also involved in retrograde traffic to the cis-Golgi. Promotes the formation of vacuolar membrane 'bulbs'. Necessary to deliver proteins to the lytic vacuole, but seems not involved in storage proteins transport. Required for amyloplast sedimentation in the endodermis during shoot gravitropism, which are thus acting as statoliths. Expression in the endodermis is essential for the shoot gravitropic response, whereas expression in other tissues may be responsible for the correct stem and leaf shape. This Arabidopsis thaliana (Mouse-ear cress) protein is Vesicle transport v-SNARE 11.